The sequence spans 242 residues: Potassium/proton antiporter CemA (242 aa).

2 helical membrane passes run 116-136 (IIFC…YSIL) and 200-220 (ISGF…YLIF).

Belongs to the CemA family.

It localises to the plastid. Its subcellular location is the chloroplast inner membrane. The catalysed reaction is K(+)(in) + H(+)(out) = K(+)(out) + H(+)(in). Contributes to K(+)/H(+) antiport activity by supporting proton efflux to control proton extrusion and homeostasis in chloroplasts in a light-dependent manner to modulate photosynthesis. Prevents excessive induction of non-photochemical quenching (NPQ) under continuous-light conditions. Indirectly promotes efficient inorganic carbon uptake into chloroplasts. The sequence is that of Potassium/proton antiporter CemA from Chloranthus spicatus (Chulantree).